The sequence spans 177 residues: MSLTAQFSPPVTGITRSLRDTKPSLSNLRVFPVYTEIRTMTTSNLRKSACFVAKAIEQRRDTAGSESESEATPSPAEESGSGEDKEVEISAIGAEIKAAMEQRKTAEEEKGKNEFLSGVAEEVKEIEWPAFQKVLGTTGVVLGVIAGSSVVLLTVNFLLAELSDRVFIGRGVQDFFS.

Residues 1–38 constitute a chloroplast transit peptide; it reads MSLTAQFSPPVTGITRSLRDTKPSLSNLRVFPVYTEIR. Residues 60 to 87 form a disordered region; the sequence is RDTAGSESESEATPSPAEESGSGEDKEV. Positions 64-79 are enriched in low complexity; sequence GSESESEATPSPAEES. The helical transmembrane segment at 140 to 160 threads the bilayer; that stretch reads VVLGVIAGSSVVLLTVNFLLA.

The protein belongs to the SecE/SEC61-gamma family. Part of the Sec protein translocation apparatus. Interacts with SCY1 and ALB3.

It localises to the plastid. Its subcellular location is the chloroplast thylakoid membrane. In terms of biological role, involved in the import/insertion pathway in the thylakoids. The signal recognition particle is not involved in the insertion of SECE1 in the thylakoid membrane. This Arabidopsis thaliana (Mouse-ear cress) protein is Preprotein translocase subunit SECE1 (SECE1).